The chain runs to 204 residues: Thymidylate kinase (204 aa).

12–19 contributes to the ATP binding site; sequence GVDGAGKS.

The protein belongs to the thymidylate kinase family.

The enzyme catalyses dTMP + ATP = dTDP + ADP. Functionally, phosphorylation of dTMP to form dTDP in both de novo and salvage pathways of dTTP synthesis. This is Thymidylate kinase from Thiobacillus denitrificans (strain ATCC 25259 / T1).